The sequence spans 294 residues: 33 kDa chaperonin (294 aa).

Disulfide bonds link Cys-238–Cys-240 and Cys-271–Cys-274.

Belongs to the HSP33 family. In terms of processing, under oxidizing conditions two disulfide bonds are formed involving the reactive cysteines. Under reducing conditions zinc is bound to the reactive cysteines and the protein is inactive.

It localises to the cytoplasm. In terms of biological role, redox regulated molecular chaperone. Protects both thermally unfolding and oxidatively damaged proteins from irreversible aggregation. Plays an important role in the bacterial defense system toward oxidative stress. In Caldanaerobacter subterraneus subsp. tengcongensis (strain DSM 15242 / JCM 11007 / NBRC 100824 / MB4) (Thermoanaerobacter tengcongensis), this protein is 33 kDa chaperonin.